The sequence spans 137 residues: Large ribosomal subunit protein bL21 (137 aa).

Residues 1-26 (MADTKTATPATDAEEATATPPAAAPS) form a disordered region.

The protein belongs to the bacterial ribosomal protein bL21 family. Part of the 50S ribosomal subunit. Contacts protein L20.

This protein binds to 23S rRNA in the presence of protein L20. The polypeptide is Large ribosomal subunit protein bL21 (Parasynechococcus marenigrum (strain WH8102)).